Consider the following 256-residue polypeptide: Thiazole synthase (256 aa).

Lys96 functions as the Schiff-base intermediate with DXP in the catalytic mechanism. Residues Gly157, 184 to 185, and 206 to 207 each bind 1-deoxy-D-xylulose 5-phosphate; these read AG and NT.

Belongs to the ThiG family. In terms of assembly, homotetramer. Forms heterodimers with either ThiH or ThiS.

It localises to the cytoplasm. The catalysed reaction is [ThiS sulfur-carrier protein]-C-terminal-Gly-aminoethanethioate + 2-iminoacetate + 1-deoxy-D-xylulose 5-phosphate = [ThiS sulfur-carrier protein]-C-terminal Gly-Gly + 2-[(2R,5Z)-2-carboxy-4-methylthiazol-5(2H)-ylidene]ethyl phosphate + 2 H2O + H(+). The protein operates within cofactor biosynthesis; thiamine diphosphate biosynthesis. Functionally, catalyzes the rearrangement of 1-deoxy-D-xylulose 5-phosphate (DXP) to produce the thiazole phosphate moiety of thiamine. Sulfur is provided by the thiocarboxylate moiety of the carrier protein ThiS. In vitro, sulfur can be provided by H(2)S. The sequence is that of Thiazole synthase from Brucella canis (strain ATCC 23365 / NCTC 10854 / RM-666).